A 428-amino-acid polypeptide reads, in one-letter code: Enolase (428 aa).

Gln167 is a (2R)-2-phosphoglycerate binding site. The Proton donor role is filled by Glu209. 3 residues coordinate Mg(2+): Asp246, Glu288, and Asp315. Residues Lys340, Arg369, Ser370, and Lys391 each contribute to the (2R)-2-phosphoglycerate site. The active-site Proton acceptor is Lys340.

The protein belongs to the enolase family. As to quaternary structure, component of the RNA degradosome, a multiprotein complex involved in RNA processing and mRNA degradation. Mg(2+) is required as a cofactor.

It is found in the cytoplasm. The protein localises to the secreted. The protein resides in the cell surface. It catalyses the reaction (2R)-2-phosphoglycerate = phosphoenolpyruvate + H2O. It participates in carbohydrate degradation; glycolysis; pyruvate from D-glyceraldehyde 3-phosphate: step 4/5. Its function is as follows. Catalyzes the reversible conversion of 2-phosphoglycerate (2-PG) into phosphoenolpyruvate (PEP). It is essential for the degradation of carbohydrates via glycolysis. The polypeptide is Enolase (Pseudomonas savastanoi pv. phaseolicola (strain 1448A / Race 6) (Pseudomonas syringae pv. phaseolicola (strain 1448A / Race 6))).